A 278-amino-acid polypeptide reads, in one-letter code: Complement component 1 Q subcomponent-binding protein, mitochondrial (278 aa).

Residues 1-70 (MLPLLRCVPR…PVPCACGCGA (70 aa)) constitute a mitochondrion transit peptide. Residues 73-90 (TEGDKAFVEFLTDEIKEE) are C1q binding. Lys88 and Lys91 each carry N6-acetyllysine. The disordered stretch occupies residues 133–162 (NNSIPPTFDGEEEPSQGQKAEEQEPERTST). The interval 165 to 209 (FVVEVTKTDGKKTLVLDCHYPEDEIGHEDEAESDIFSIKEVSFQA) is interaction with MAVS. A Phosphotyrosine modification is found at Tyr184. 2 positions are modified to phosphoserine: Ser197 and Ser201. Residue Thr210 is modified to Phosphothreonine.

Belongs to the MAM33 family. In terms of assembly, homotrimer; three monomers form a donut-shaped structure with an unusually asymmetric charge distribution on the surface. Interacts with CDK13, HRK, VTN, NFYB, ADRA1B, FOXC1, DDX21, DDX50, NCL, SRSF1 and SRSF9. Interacts with CD93; the association may represent a cell surface C1q receptor. Interacts with KRT1; the association represents a cell surface kininogen receptor. Interacts with CD209; the interaction is indicative for a C1q:C1QBP:CD209 signaling complex. Interacts with FBL and RRP1; the respective interactions with C1QBP are competitive. Probably associates with the mitoribosome. Interacts with MAVS; the interaction occurs upon viral transfection. Interacts with PPIF. Interacts with U2AF1L4. Interacts with PLEKHN1. Interacts with VGF-derived peptide TLQP-21. Interacts with MRE11 and RAD50; forming the MRC (MRE11-RAD50-C1QBP) complex that inhibits the activity of MRE11. Ubiquitous.

The protein resides in the mitochondrion matrix. It is found in the nucleus. It localises to the cell membrane. The protein localises to the secreted. Its subcellular location is the cytoplasm. The protein resides in the nucleolus. Is believed to be a multifunctional and multicompartmental protein involved in inflammation and infection processes, ribosome biogenesis, protein synthesis in mitochondria, regulation of apoptosis, transcriptional regulation and pre-mRNA splicing. At the cell surface is thought to act as an endothelial receptor for plasma proteins of the complement and kallikrein-kinin cascades. Putative receptor for C1q; specifically binds to the globular 'heads' of C1q thus inhibiting C1; may perform the receptor function through a complex with C1qR/CD93. In complex with cytokeratin-1/KRT1 is a high affinity receptor for kininogen-1/HMWK. Can also bind other plasma proteins, such as coagulation factor XII leading to its autoactivation. May function to bind initially fluid kininogen-1 to the cell membrane. The secreted form may enhance both extrinsic and intrinsic coagulation pathways. It is postulated that the cell surface form requires docking with transmembrane proteins for downstream signaling which might be specific for a cell-type or response. By acting as C1q receptor is involved in chemotaxis of immature dendritic cells and neutrophils and is proposed to signal through CD209/DC-SIGN on immature dendritic cells, through integrin alpha-4/beta-1 during trophoblast invasion of the decidua, and through integrin beta-1 during endothelial cell adhesion and spreading. Signaling involved in inhibition of innate immune response is implicating the PI3K-AKT/PKB pathway. Required for protein synthesis in mitochondria. In mitochondrial translation may be involved in formation of functional 55S mitoribosomes; the function seems to involve its RNA-binding activity. Acts as a RNA modification reader, which specifically recognizes and binds mitochondrial RNAs modified by C5-methylcytosine (m5C) in response to stress, and promotes recruitment of the mitochondrial degradosome complex, leading to their degradation. May be involved in the nucleolar ribosome maturation process; the function may involve the exchange of FBL for RRP1 in the association with pre-ribosome particles. Involved in regulation of RNA splicing by inhibiting the RNA-binding capacity of SRSF1 and its phosphorylation. Is required for the nuclear translocation of splicing factor U2AF1L4. Involved in regulation of CDKN2A- and HRK-mediated apoptosis. May be involved in regulation of FOXC1 transcriptional activity and NFY/CCAAT-binding factor complex-mediated transcription. May play a role in antibacterial defense. Acts as a regulator of DNA repair via homologous recombination by inhibiting the activity of MRE11: interacts with unphosphorylated MRE11 and RAD50 in absence of DNA damage, preventing formation and activity of the MRN complex. Following DNA damage, dissociates from phosphorylated MRE11, allowing formation of the MRN complex. The chain is Complement component 1 Q subcomponent-binding protein, mitochondrial (C1qbp) from Mus musculus (Mouse).